Consider the following 922-residue polypeptide: Chaperone protein ClpC, chloroplastic (922 aa).

A chloroplast-targeting transit peptide spans Met-1–Val-72. Positions Phe-92–Glu-234 constitute a Clp R domain. Repeat regions lie at residues Phe-95–Gly-160 and Phe-170–Glu-234. The segment at Leu-255–Pro-502 is i. An ATP-binding site is contributed by Gly-300–Thr-307. One can recognise a UVR domain in the interval Asp-509–Gln-544. The segment at Val-569–Ser-760 is II. Residue Gly-643 to Ser-650 coordinates ATP.

This sequence belongs to the ClpA/ClpB family. ClpC subfamily.

Its subcellular location is the plastid. The protein resides in the chloroplast. In terms of biological role, molecular chaperone that may interact with a ClpP-like protease involved in degradation of denatured proteins in the chloroplast. In Pisum sativum (Garden pea), this protein is Chaperone protein ClpC, chloroplastic.